The following is a 310-amino-acid chain: Thioredoxin reductase (310 aa).

34–41 provides a ligand contact to FAD; that stretch reads NGMQPGGQ. An intrachain disulfide couples Cys-135 to Cys-138. 281–290 is an FAD binding site; sequence DVQDKIYRQA.

The protein belongs to the class-II pyridine nucleotide-disulfide oxidoreductase family. Homodimer. It depends on FAD as a cofactor.

It localises to the cytoplasm. The catalysed reaction is [thioredoxin]-dithiol + NADP(+) = [thioredoxin]-disulfide + NADPH + H(+). The polypeptide is Thioredoxin reductase (trxB) (Rickettsia typhi (strain ATCC VR-144 / Wilmington)).